Consider the following 25-residue polypeptide: Unknown protein 4 (25 aa).

Positions 1-10 (IEHNAEEIRK) are enriched in basic and acidic residues. Residues 1 to 25 (IEHNAEEIRKTAIRTAVQNTAQQTK) are disordered. The span at 16–25 (AVQNTAQQTK) shows a compositional bias: polar residues.

The sequence is that of Unknown protein 4 from Lonomia obliqua (Moth).